A 763-amino-acid polypeptide reads, in one-letter code: Amine oxidase [copper-containing] 3 (763 aa).

Residues 1–6 (MNQKTT) lie on the Cytoplasmic side of the membrane. Residues 7–27 (LVLLALAVITIFALVCVLIAG) form a helical; Signal-anchor for type II membrane protein membrane-spanning segment. Residues 28 to 763 (RGGDGGEASQ…AFSHGGFFTN (736 aa)) lie on the Extracellular side of the membrane. N-linked (GlcNAc...) asparagine glycosylation occurs at asparagine 137. Cysteine 198 and cysteine 199 are joined by a disulfide. Asparagine 232 and asparagine 294 each carry an N-linked (GlcNAc...) asparagine glycan. The active-site Proton acceptor is the aspartate 386. An intrachain disulfide couples cysteine 404 to cysteine 430. Residue tyrosine 471 is the Schiff-base intermediate with substrate; via topaquinone of the active site. Tyrosine 471 is subject to 2',4',5'-topaquinone. Cu(2+) is bound by residues histidine 520 and histidine 522. Positions 529, 530, 531, and 572 each coordinate Ca(2+). An N-linked (GlcNAc...) asparagine glycan is attached at asparagine 618. Positions 641, 663, and 665 each coordinate Ca(2+). A glycan (N-linked (GlcNAc...) asparagine) is linked at asparagine 666. Positions 667, 673, and 674 each coordinate Ca(2+). Histidine 684 contributes to the Cu(2+) binding site. Cysteine 734 and cysteine 741 form a disulfide bridge.

This sequence belongs to the copper/topaquinone oxidase family. As to quaternary structure, homodimer; disulfide-linked. Probably forms heterodimers with AOC2. Requires Cu(2+) as cofactor. Ca(2+) is required as a cofactor. The cofactor is L-topaquinone. Post-translationally, topaquinone (TPQ) is generated by copper-dependent autoxidation of a specific tyrosyl residue. In terms of processing, N- and O-glycosylated.

The protein localises to the cell membrane. The enzyme catalyses methylamine + O2 + H2O = formaldehyde + H2O2 + NH4(+). It catalyses the reaction benzylamine + O2 + H2O = benzaldehyde + H2O2 + NH4(+). It carries out the reaction 2-phenylethylamine + O2 + H2O = 2-phenylacetaldehyde + H2O2 + NH4(+). Its function is as follows. Catalyzes the oxidative deamination of primary amines to the corresponding aldehydes with the concomitant production of hydrogen peroxide and ammonia. Has a preference for the primary monoamines methylamine and benzylamine. Could also act on 2-phenylethylamine but much less efficiently. At endothelial cells surface can also function as a cell adhesion protein that participates in lymphocyte extravasation and recirculation by mediating the binding of lymphocytes to peripheral lymph node vascular endothelial cells in an L-selectin-independent fashion. This is Amine oxidase [copper-containing] 3 from Bos taurus (Bovine).